A 1323-amino-acid chain; its full sequence is PAS domain-containing serine/threonine-protein kinase (1323 aa).

Residue Met1 is modified to N-acetylmethionine. Position 19 is a phosphoserine (Ser19). Residues Leu20 to His47 are disordered. Residues Ala31–Ser43 are compositionally biased toward polar residues. A Phosphothreonine modification is found at Thr34. 2 PAS domains span residues Ser119–Asp190 and Tyr335–Leu402. Ser582 is modified (phosphoserine). A disordered region spans residues Ala837–Asp857. Phosphoserine is present on Ser939. The Protein kinase domain occupies Tyr999–Val1251. ATP-binding positions include Leu1005 to Val1013, Lys1028, and Glu1082 to Asp1089. The active-site Proton acceptor is Asp1128. Asp1146 contacts ATP. Phosphothreonine; by autocatalysis is present on residues Thr1161 and Thr1165. A disordered region spans residues Cys1298–Ser1323.

It belongs to the protein kinase superfamily. CAMK Ser/Thr protein kinase family. Autophosphorylated on Thr-1161 and Thr-1165. Autophosphorylation is activated by phospholipids. As to expression, ubiquitously expressed, with slightly higher expression in brain, prostate and testis. Reduced expression was found in placenta. Present in germ cells of testis and in the midpiece of sperm tails (at protein level).

It localises to the cytoplasm. The protein resides in the nucleus. It catalyses the reaction L-seryl-[protein] + ATP = O-phospho-L-seryl-[protein] + ADP + H(+). The catalysed reaction is L-threonyl-[protein] + ATP = O-phospho-L-threonyl-[protein] + ADP + H(+). Protein kinase activity is inhibited by the first PAS domain: binding of an unidentified ligand desinhibits the protein kinase activity. May be activated by autophosphorylation on Thr-1161 and Thr-1165. The activating role of autophosphorylation at Thr-1161 is unclear: according to a report, autophosphorylation at Thr-1161 does not play a major role in activation. Autophosphorylation is enhanced upon phosphatidylinositol monophosphate (phosphatidylinositol 4-phosphate) binding and inhibited upon phosphatidylinositol bi- and tri-phosphate binding. In contrast, phosphorylation of target proteins is inhibited upon all phosphatidylinositol-binding (phosphatidylinositol mono- bi- and tri-phosphate). In terms of biological role, serine/threonine-protein kinase involved in energy homeostasis and protein translation. Phosphorylates EEF1A1, GYS1, PDX1 and RPS6. Probably plays a role under changing environmental conditions (oxygen, glucose, nutrition), rather than under standard conditions. Acts as a sensor involved in energy homeostasis: regulates glycogen synthase synthesis by mediating phosphorylation of GYS1, leading to GYS1 inactivation. May be involved in glucose-stimulated insulin production in pancreas and regulation of glucagon secretion by glucose in alpha cells; however such data require additional evidences. May play a role in regulation of protein translation by phosphorylating EEF1A1, leading to increase translation efficiency. May also participate in respiratory regulation. This is PAS domain-containing serine/threonine-protein kinase (PASK) from Homo sapiens (Human).